A 158-amino-acid chain; its full sequence is Transcription elongation factor GreA (158 aa).

It belongs to the GreA/GreB family.

In terms of biological role, necessary for efficient RNA polymerase transcription elongation past template-encoded arresting sites. The arresting sites in DNA have the property of trapping a certain fraction of elongating RNA polymerases that pass through, resulting in locked ternary complexes. Cleavage of the nascent transcript by cleavage factors such as GreA or GreB allows the resumption of elongation from the new 3'terminus. GreA releases sequences of 2 to 3 nucleotides. The protein is Transcription elongation factor GreA of Rhizobium leguminosarum bv. trifolii (strain WSM2304).